A 255-amino-acid polypeptide reads, in one-letter code: 3-deoxy-manno-octulosonate cytidylyltransferase (255 aa).

The protein belongs to the KdsB family.

It localises to the cytoplasm. The catalysed reaction is 3-deoxy-alpha-D-manno-oct-2-ulosonate + CTP = CMP-3-deoxy-beta-D-manno-octulosonate + diphosphate. The protein operates within nucleotide-sugar biosynthesis; CMP-3-deoxy-D-manno-octulosonate biosynthesis; CMP-3-deoxy-D-manno-octulosonate from 3-deoxy-D-manno-octulosonate and CTP: step 1/1. Its pathway is bacterial outer membrane biogenesis; lipopolysaccharide biosynthesis. Activates KDO (a required 8-carbon sugar) for incorporation into bacterial lipopolysaccharide in Gram-negative bacteria. The polypeptide is 3-deoxy-manno-octulosonate cytidylyltransferase (Saccharophagus degradans (strain 2-40 / ATCC 43961 / DSM 17024)).